Here is a 387-residue protein sequence, read N- to C-terminus: Natterin-4 (387 aa).

Residues methionine 1 to alanine 18 form the signal peptide. Residues glutamate 19 to glutamine 46 constitute a propeptide that is removed on maturation. Positions asparagine 31–leucine 40 are enriched in basic and acidic residues. Residues asparagine 31 to glutamine 57 form a disordered region.

It belongs to the natterin family. In terms of processing, contains 4 disulfide bonds. Expressed by the venom gland.

It localises to the secreted. With respect to regulation, inhibited by tissue-kallikrein inhibitor TKI and trasylol. Plasma kallikrein inhibitor PKSI527 and classical inhibitors of serine-, metallo-, thiol- or aspartate-peptidases evokes a minor inhibition of the peptide digestion. In terms of biological role, shows nociceptive, edema-inducing and kininogenase activity with release of kallidin from low molecular weight kininogen. The cleavage occurs at Met-Lys bonds. The chain is Natterin-4 from Thalassophryne nattereri (Copper Joe toadfish).